The chain runs to 320 residues: cUMP-AMP-activated phospholipase (320 aa).

The PNPLA domain occupies 23–204 (LALDGGGAKG…CANNPTLFAI (182 aa)). Residues 27–32 (GGGAKG) carry the GXGXXG motif. The GXSXG motif lies at 59–63 (GTSTG). S61 acts as the Nucleophile in catalysis. Catalysis depends on D191, which acts as the Proton acceptor. Residues 191-193 (DGG) carry the DGA/G motif.

Belongs to the patatin family.

The catalysed reaction is a 1,2-diacyl-sn-glycero-3-phosphocholine + H2O = a 2-acyl-sn-glycero-3-phosphocholine + a fatty acid + H(+). Phospholipase activity is specifically activated upon 3',3'-cUAMP binding. Is not activated by the other cyclic dinucleotides 3',3'-cGAMP, 3',3'-c-diAMP and 3',3'-c-diGMP. Therefore, is specifically activated by only the nucleotide synthesized from its adjacently encoded nucleotidyltransferase (CdnE). In terms of biological role, effector phospholipase of a CBASS antivirus system. CBASS (cyclic oligonucleotide-based antiphage signaling system) provides immunity against bacteriophage. The CD-NTase protein synthesizes cyclic nucleotides in response to infection; these serve as specific second messenger signals. The signals activate a diverse range of effectors, leading to bacterial cell death and thus abortive phage infection. A type II-A(UA) CBASS system. Phospholipase that is activated upon binding to the cyclic dinucleotide (CDN) second messenger 3',3'-cyclic UMP-AMP (3',3'-cUAMP). The sequence is that of cUMP-AMP-activated phospholipase from Escherichia coli.